The following is a 388-amino-acid chain: MKWLLLLGLVALSECIMYKVPLIRKKSLRRTLSERGLLKDFLKKHNLNPARKYFPQWKAPTLVDEQPLENYLDMEYFGTIGIGTPAQDFTVVFDTGSSNLWVPSVYCSSLACTNHNRFNPEDSSTYQSTSETVSITYGTGSMTGILGYDTVQVGGISDTNQIFGLSETEPGSFLYYAPFDGILGLAYPSISSSGATPVFDNIWNQGLVSQDLFSVYLSADDQSGSVVIFGGIDSSYYTGSLNWVPVTVEGYWQITVDSITMNGEAIACAEGCQAIVDTGTSLLTGPTSPIANIQSDIGASENSDGDMVVSCSAISSLPDIVFTINGVQYPVPPSAYILQSEGSCISGFQGMNLPTESGELWILGDVFIRQYFTVFDRANNQVGLAPVA.

The signal sequence occupies residues 1–15 (MKWLLLLGLVALSEC). The propeptide at 16-62 (IMYKVPLIRKKSLRRTLSERGLLKDFLKKHNLNPARKYFPQWKAPTL) is activation peptide. The 310-residue stretch at 76-385 (YFGTIGIGTP…DRANNQVGLA (310 aa)) folds into the Peptidase A1 domain. Asp94 is a catalytic residue. 2 disulfide bridges follow: Cys107–Cys112 and Cys268–Cys272. Residue Asp277 is part of the active site. A disulfide bridge links Cys311 with Cys344.

It belongs to the peptidase A1 family.

It is found in the secreted. The catalysed reaction is Preferential cleavage: hydrophobic, preferably aromatic, residues in P1 and P1' positions. Cleaves 1-Phe-|-Val-2, 4-Gln-|-His-5, 13-Glu-|-Ala-14, 14-Ala-|-Leu-15, 15-Leu-|-Tyr-16, 16-Tyr-|-Leu-17, 23-Gly-|-Phe-24, 24-Phe-|-Phe-25 and 25-Phe-|-Tyr-26 bonds in the B chain of insulin.. In terms of biological role, shows particularly broad specificity; although bonds involving phenylalanine and leucine are preferred, many others are also cleaved to some extent. The polypeptide is Pepsin A-3 (PGA3) (Homo sapiens (Human)).